A 397-amino-acid polypeptide reads, in one-letter code: Adenylosuccinate synthetase (397 aa).

GTP contacts are provided by residues 11-17 and 39-41; these read GDEGKGK and GHT. The active-site Proton acceptor is the D12. Mg(2+) contacts are provided by D12 and G39. Residues 12–15, 37–40, T125, R139, Q212, T227, and R290 each bind IMP; these read DEGK and NAGH. H40 acts as the Proton donor in catalysis. 286–292 contacts substrate; sequence STTGRPR. Residues R292, 318-320, and 386-388 contribute to the GTP site; these read KAD and STG.

It belongs to the adenylosuccinate synthetase family. As to quaternary structure, homodimer. Mg(2+) serves as cofactor.

The protein localises to the cytoplasm. The enzyme catalyses IMP + L-aspartate + GTP = N(6)-(1,2-dicarboxyethyl)-AMP + GDP + phosphate + 2 H(+). It participates in purine metabolism; AMP biosynthesis via de novo pathway; AMP from IMP: step 1/2. In terms of biological role, plays an important role in the de novo pathway of purine nucleotide biosynthesis. Catalyzes the first committed step in the biosynthesis of AMP from IMP. This Thermotoga maritima (strain ATCC 43589 / DSM 3109 / JCM 10099 / NBRC 100826 / MSB8) protein is Adenylosuccinate synthetase.